Here is a 238-residue protein sequence, read N- to C-terminus: MTNQLPRVVTIRELLEAGAHFGHPTNRWNPKMKPYIFTARNGIHIIDLQKTVAGLSQAYQFITEVTARGEKILFVGTKKQAQEAVMEEAIRAGQFYINRRWLGGTLTNFATMKRRLKLLSDLEEQRDRGDFARLTKAEAAKLEEKIDRLNRVFAGLKGMDRLPGAIFIVDPRKEELAVREADKEGIPIVAMVDTNCDPDPIDYVIPCNDDAIRGIRLMTSKIADAAIEGMRRRESSQE.

This sequence belongs to the universal ribosomal protein uS2 family.

This is Small ribosomal subunit protein uS2 from Chloroflexus aggregans (strain MD-66 / DSM 9485).